The sequence spans 788 residues: Protein translocase subunit SecA 2 (788 aa).

Residues Gln86, 104 to 108, and Asp493 each bind ATP; that span reads GEGKT.

Belongs to the SecA family. Monomer and homodimer. Part of the essential Sec protein translocation apparatus which comprises SecA, SecYEG and auxiliary proteins SecDF. Other proteins may also be involved.

The protein localises to the cell membrane. It localises to the cytoplasm. The enzyme catalyses ATP + H2O + cellular proteinSide 1 = ADP + phosphate + cellular proteinSide 2.. In terms of biological role, part of the Sec protein translocase complex. Interacts with the SecYEG preprotein conducting channel. Has a central role in coupling the hydrolysis of ATP to the transfer of proteins into and across the cell membrane, serving as an ATP-driven molecular motor driving the stepwise translocation of polypeptide chains across the membrane. The protein is Protein translocase subunit SecA 2 of Bacillus cereus (strain ZK / E33L).